The sequence spans 87 residues: Small ribosomal subunit protein uS17 (87 aa).

This sequence belongs to the universal ribosomal protein uS17 family. As to quaternary structure, part of the 30S ribosomal subunit.

In terms of biological role, one of the primary rRNA binding proteins, it binds specifically to the 5'-end of 16S ribosomal RNA. The polypeptide is Small ribosomal subunit protein uS17 (Bacillus velezensis (strain DSM 23117 / BGSC 10A6 / LMG 26770 / FZB42) (Bacillus amyloliquefaciens subsp. plantarum)).